The sequence spans 505 residues: Lysine--tRNA ligase (505 aa).

Positions 409 and 416 each coordinate Mg(2+).

This sequence belongs to the class-II aminoacyl-tRNA synthetase family. In terms of assembly, homodimer. Mg(2+) is required as a cofactor.

The protein localises to the cytoplasm. The enzyme catalyses tRNA(Lys) + L-lysine + ATP = L-lysyl-tRNA(Lys) + AMP + diphosphate. This Latilactobacillus sakei subsp. sakei (strain 23K) (Lactobacillus sakei subsp. sakei) protein is Lysine--tRNA ligase.